A 912-amino-acid chain; its full sequence is MINSLLTRVFGSRNERQLRQLTRLVTQINALEPTIEKLSDAELQAKTPEFKQRLAAGESLDKILPEAFAVCREASRRVLGMRHYDVQLIGGMVLHLGKIAEMRTGEGKTLVATLPVYLNALQGEGVHVVTVNDYLARRDAAQMGKLYNWLGLSVGVVYPGMPHSDKREAYGSDITYGTNNEFGFDYLRDNMALSRADRYQRTLHYAIVDEVDSILIDEARTPLIISGPADESPELYIRVNRIVPQLTKQESEEGEGDFWVDEKGKQVHLSEAGMGHAEELLLQAGILENAEDGLYAAQNLSVVHHLNAALRAHAIYQRDVDYIVRDGEVVIVDEFTGRTLSGRRWSDGLHQAVEAKEGVPVQRENQTLASITFQNLFRMYKKLSGMTGTADTEAYEFQSIYGLEVVVIPTNRPTVRKDHPDQVFLNRKGKFNAVLADIEDCAKRGQPVLVGTTSIETSEMLSEHLRKAGVKHEVLNAKQHEREATIVANAGQPGAVTIATNMAGRGTDIVLGGSLESEYHALGEDATEDARFKIKTDWQRRHDAVKAAGGLHIIGTERHESRRIDNQLRGRAGRQGDPGSSRFYLSLEDNLMRIFASDWVQKAMRMMGMKEDDVIEDRLVSRQIEKAQRKVEAHNFDIRKNLLDFDDVNNDQRKVIYAQRDELLDAESVKDNVDGIRGDVIYDLVARFVPPNSVDEQWDVKGLEATLESELGVTLSLTDMVRTQEEIDAEQIAAKVQAAVDAHFAEKEAAVGNDTMRALEKHVMLTVLDQGWKEHLAKMDYLRQGIYLRGYAQKQPKQEYKKEAFELFSEMLENVKREVIHLLARVRIRSEEEVAELEEQERLHAQARLMASQFQHQDVGGYGTDEEAAQVQSGNAPLPVSQVTRDEPKVGRNDPCPCGSGKKYKHCHGQLS.

ATP is bound by residues Gln-87, 105–109 (GEGKT), and Asp-508. Positions 865-912 (DEEAAQVQSGNAPLPVSQVTRDEPKVGRNDPCPCGSGKKYKHCHGQLS) are disordered. Zn(2+) is bound by residues Cys-896, Cys-898, Cys-907, and His-908. Residues 902-912 (KKYKHCHGQLS) show a composition bias toward basic residues.

This sequence belongs to the SecA family. As to quaternary structure, monomer and homodimer. Part of the essential Sec protein translocation apparatus which comprises SecA, SecYEG and auxiliary proteins SecDF-YajC and YidC. Zn(2+) is required as a cofactor.

It is found in the cell inner membrane. The protein localises to the cytoplasm. It catalyses the reaction ATP + H2O + cellular proteinSide 1 = ADP + phosphate + cellular proteinSide 2.. In terms of biological role, part of the Sec protein translocase complex. Interacts with the SecYEG preprotein conducting channel. Has a central role in coupling the hydrolysis of ATP to the transfer of proteins into and across the cell membrane, serving both as a receptor for the preprotein-SecB complex and as an ATP-driven molecular motor driving the stepwise translocation of polypeptide chains across the membrane. This chain is Protein translocase subunit SecA, found in Xanthomonas oryzae pv. oryzae (strain PXO99A).